An 802-amino-acid polypeptide reads, in one-letter code: Bifunctional purine biosynthetic protein ADE5,7 (802 aa).

The interval 1–450 (MLNILVLGNG…QNSESSKVAI (450 aa)) is GARS. Positions 114 to 330 (KRFMSKHNIP…LAQVFLAAAE (217 aa)) constitute an ATP-grasp domain. 141-203 (QAHTDKAFVI…EQFLEGDEIS (63 aa)) lines the ATP pocket. Mg(2+) is bound by residues glutamate 298 and asparagine 300. Residues 451–802 (TYADSGVSVD…CVIENGTKLY (352 aa)) are AIRS. Residues serine 455 and serine 458 each carry the phosphoserine modification.

In the N-terminal section; belongs to the GARS family. This sequence in the C-terminal section; belongs to the AIR synthase family. It depends on Mg(2+) as a cofactor. Requires Mn(2+) as cofactor.

The protein resides in the cytoplasm. The catalysed reaction is 5-phospho-beta-D-ribosylamine + glycine + ATP = N(1)-(5-phospho-beta-D-ribosyl)glycinamide + ADP + phosphate + H(+). The enzyme catalyses 2-formamido-N(1)-(5-O-phospho-beta-D-ribosyl)acetamidine + ATP = 5-amino-1-(5-phospho-beta-D-ribosyl)imidazole + ADP + phosphate + H(+). The protein operates within purine metabolism; IMP biosynthesis via de novo pathway; 5-amino-1-(5-phospho-D-ribosyl)imidazole from N(2)-formyl-N(1)-(5-phospho-D-ribosyl)glycinamide: step 2/2. It participates in purine metabolism; IMP biosynthesis via de novo pathway; N(1)-(5-phospho-D-ribosyl)glycinamide from 5-phospho-alpha-D-ribose 1-diphosphate: step 2/2. Functionally, catalyzes the second and fifth step in the 'de novo' purine biosynthesis pathway; contains phosphoribosylamine--glycine ligase (GARS) and phosphoribosylformylglycinamidine cyclo-ligase (AIRS) activities. This Saccharomyces cerevisiae (strain ATCC 204508 / S288c) (Baker's yeast) protein is Bifunctional purine biosynthetic protein ADE5,7.